Reading from the N-terminus, the 75-residue chain is Small ribosomal subunit protein eS28 (75 aa).

The protein belongs to the eukaryotic ribosomal protein eS28 family.

This Methanococcus aeolicus (strain ATCC BAA-1280 / DSM 17508 / OCM 812 / Nankai-3) protein is Small ribosomal subunit protein eS28.